The following is a 1128-amino-acid chain: Large proline-rich protein BAG6 (1128 aa).

N-acetylmethionine is present on Met-1. One can recognise a Ubiquitin-like domain in the interval 17 to 92 (LEVLVKTLDS…HLVERAPPQT (76 aa)). 5 disordered regions span residues 87-126 (RAPP…SVHD), 185-267 (CRGG…NHPS), 380-435 (VTMT…AASH), 456-523 (IQDS…ALPG), and 555-598 (PGMA…SASD). Over residues 95-108 (PSGASSGTGSASAT) the composition is skewed to low complexity. A Phosphoserine modification is found at Ser-96. Phosphothreonine is present on Thr-117. Positions 189–201 (SQAQHSQPPSQMP) are enriched in polar residues. Residues 236–265 (RASAQSPGLSPSGPAPAGPTPAPETNAPNH) form repeat 1. The 4 X 29 AA approximate repeats stretch occupies residues 236-630 (RASAQSPGLS…MTSPTITVAM (395 aa)). A compositionally biased stretch (low complexity) spans 238–247 (SAQSPGLSPS). 2 stretches are compositionally biased toward pro residues: residues 248-257 (GPAPAGPTPA) and 388-402 (RPPP…PPGP). Residues 403–412 (GQASSLAPSS) show a composition bias toward low complexity. The stretch at 410–438 (PSSTTVESSTEGAPPPGPAPPPAASHPRV) is repeat 2. Composition is skewed to pro residues over residues 422 to 433 (APPPGPAPPPAA) and 502 to 515 (PTPP…PGGP). Residues 564-581 (ATASASAGTTNTATTAGP) are compositionally biased toward low complexity. A run of 2 repeats spans residues 569-596 (SAGT…QPSA) and 602-630 (SQLL…TVAM). The segment covering 583-594 (PGGPAQPPPPQP) has biased composition (pro residues). 2 disordered regions span residues 648–689 (QTAA…GLGP) and 939–1128 (VGDP…AEDP). Positions 652 to 677 (PPAPPPPPPPPPPAPEQQTAPPPGSP) are enriched in pro residues. Residues 678–688 (PGGAGSPGGLG) show a composition bias toward gly residues. Phosphoserine is present on residues Ser-960 and Ser-969. Low complexity predominate over residues 999–1016 (AAAETEPWAAAVPPEWVP). The interval 1006–1036 (WAAAVPPEWVPIIQQDIQSQRKVKPQPPLSD) is required for interaction with GET4. A Nuclear localization site motif is present at residues 1008-1050 (AAVPPEWVPIIQQDIQSQRKVKPQPPLSDAYLSGMPAKRRKTM). Residues 1018-1128 (IQQDIQSQRK…NAHRAFAEDP (111 aa)) are sufficient for the delivery of client proteins to the endoplasmic reticulum. Thr-1049 is modified (phosphothreonine). Residues 1054–1111 (GPQLLLSEAVSRAAKAAGARPLTSPESLSRDLEAPEVQESYRQQLRADIQKRLQEDPN) are BAG-similar domain, required and sufficient for interaction with UBL4A. The segment covering 1062–1072 (AVSRAAKAAGA) has biased composition (low complexity). 2 positions are modified to phosphoserine: Ser-1077 and Ser-1113.

As to quaternary structure, component of the BAG6/BAT3 complex, also named BAT3 complex, at least composed of BAG6, UBL4A and GET4/TRC35. Interacts with GET4; the interaction is direct and localizes BAG6 in the cytosol. Interacts with UBL4A; the interaction is direct and required for UBL4A protein stability. Interacts with AIFM1. Interacts with HSPA2. Interacts with CTCFL. Interacts with p300/EP300. Interacts (via ubiquitin-like domain) with RNF126; required for BAG6-dependent ubiquitination of proteins mislocalized to the cytosol. Interacts (via ubiquitin-like domain) with SGTA; SGTA competes with RNF126 by binding the same region of BAG6, thereby promoting deubiquitination of BAG6-target proteins and rescuing them from degradation. Interacts with ricin A chain. Interacts with VCP and AMFR; both form the VCP/p97-AMFR/gp78 complex. Interacts with SYVN1. Interacts with USP13; the interaction is direct and may mediate UBL4A deubiquitination. Interacts with ZFAND2B. Interacts with KPNA2. Interacts with UBQLN4. Post-translationally, ricin can induce a cleavage by the caspase CASP3. The released C-terminal peptide induces apoptosis.

The protein resides in the cytoplasm. It is found in the cytosol. The protein localises to the nucleus. It localises to the secreted. Its subcellular location is the extracellular exosome. ATP-independent molecular chaperone preventing the aggregation of misfolded and hydrophobic patches-containing proteins. Functions as part of a cytosolic protein quality control complex, the BAG6/BAT3 complex, which maintains these client proteins in a soluble state and participates in their proper delivery to the endoplasmic reticulum or alternatively can promote their sorting to the proteasome where they undergo degradation. The BAG6/BAT3 complex is involved in the post-translational delivery of tail-anchored/type II transmembrane proteins to the endoplasmic reticulum membrane. Recruited to ribosomes, it interacts with the transmembrane region of newly synthesized tail-anchored proteins and together with SGTA and ASNA1 mediates their delivery to the endoplasmic reticulum. Client proteins that cannot be properly delivered to the endoplasmic reticulum are ubiquitinated by RNF126, an E3 ubiquitin-protein ligase associated with BAG6 and are sorted to the proteasome. SGTA which prevents the recruitment of RNF126 to BAG6 may negatively regulate the ubiquitination and the proteasomal degradation of client proteins. Similarly, the BAG6/BAT3 complex also functions as a sorting platform for proteins of the secretory pathway that are mislocalized to the cytosol either delivering them to the proteasome for degradation or to the endoplasmic reticulum. The BAG6/BAT3 complex also plays a role in the endoplasmic reticulum-associated degradation (ERAD), a quality control mechanism that eliminates unwanted proteins of the endoplasmic reticulum through their retrotranslocation to the cytosol and their targeting to the proteasome. It maintains these retrotranslocated proteins in an unfolded yet soluble state condition in the cytosol to ensure their proper delivery to the proteasome. BAG6 is also required for selective ubiquitin-mediated degradation of defective nascent chain polypeptides by the proteasome. In this context, it may participate in the production of antigenic peptides and play a role in antigen presentation in immune response. BAG6 is also involved in endoplasmic reticulum stress-induced pre-emptive quality control, a mechanism that selectively attenuates the translocation of newly synthesized proteins into the endoplasmic reticulum and reroutes them to the cytosol for proteasomal degradation. BAG6 may ensure the proper degradation of these proteins and thereby protects the endoplasmic reticulum from protein overload upon stress. By inhibiting the polyubiquitination and subsequent proteasomal degradation of HSPA2 it may also play a role in the assembly of the synaptonemal complex during spermatogenesis. Also positively regulates apoptosis by interacting with and stabilizing the proapoptotic factor AIFM1. By controlling the steady-state expression of the IGF1R receptor, indirectly regulates the insulin-like growth factor receptor signaling pathway. In terms of biological role, involved in DNA damage-induced apoptosis: following DNA damage, accumulates in the nucleus and forms a complex with p300/EP300, enhancing p300/EP300-mediated p53/TP53 acetylation leading to increase p53/TP53 transcriptional activity. When nuclear, may also act as a component of some chromatin regulator complex that regulates histone 3 'Lys-4' dimethylation (H3K4me2). Functionally, released extracellularly via exosomes, it is a ligand of the natural killer/NK cells receptor NCR3 and stimulates NK cells cytotoxicity. It may thereby trigger NK cells cytotoxicity against neighboring tumor cells and immature myeloid dendritic cells (DC). Its function is as follows. May mediate ricin-induced apoptosis. This chain is Large proline-rich protein BAG6, found in Sus scrofa (Pig).